The chain runs to 26 residues: Aralin B chain (26 aa).

As to quaternary structure, disulfide-linked dimer of A and B chains. In terms of processing, glycosylated. High-mannose type oligosaccharides.

Lectin specific for galactose (Gal) and its derivatives. Induces apoptosis. Has cytotoxic activity against several human cancer cell lines. Is less cytotoxic to normal human cells. This is Aralin B chain from Aralia elata (Japanese angelica tree).